The primary structure comprises 153 residues: Ubiquitin-conjugating enzyme E2 36 (153 aa).

One can recognise a UBC core domain in the interval 5–151; the sequence is NLPRRIIKET…AKEWTRLYAS (147 aa). Cys89 (glycyl thioester intermediate) is an active-site residue.

This sequence belongs to the ubiquitin-conjugating enzyme family. Interacts with yeast and human Mms2, with the RING domain of RGLG2 and with UEV1A, UEV1B, UEV1C and UEV1D. As to expression, ubiquitously expressed at low level.

It carries out the reaction S-ubiquitinyl-[E1 ubiquitin-activating enzyme]-L-cysteine + [E2 ubiquitin-conjugating enzyme]-L-cysteine = [E1 ubiquitin-activating enzyme]-L-cysteine + S-ubiquitinyl-[E2 ubiquitin-conjugating enzyme]-L-cysteine.. Its pathway is protein modification; protein ubiquitination. Its function is as follows. Catalyzes the synthesis of non-canonical poly-ubiquitin chains that are linked through 'Lys-63'. This type of poly-ubiquitination does not lead to protein degradation by the proteasome. Mediates transcriptional activation of target genes. Required for postreplication repair of UV-damaged DNA and for adapting root developmental programs to suboptimal availability of iron. The polypeptide is Ubiquitin-conjugating enzyme E2 36 (UBC36) (Arabidopsis thaliana (Mouse-ear cress)).